A 482-amino-acid chain; its full sequence is Glutamyl-tRNA(Gln) amidotransferase subunit A (482 aa).

Active-site charge relay system residues include K74 and S149. Catalysis depends on S173, which acts as the Acyl-ester intermediate.

Belongs to the amidase family. GatA subfamily. As to quaternary structure, heterotrimer of A, B and C subunits.

The catalysed reaction is L-glutamyl-tRNA(Gln) + L-glutamine + ATP + H2O = L-glutaminyl-tRNA(Gln) + L-glutamate + ADP + phosphate + H(+). Allows the formation of correctly charged Gln-tRNA(Gln) through the transamidation of misacylated Glu-tRNA(Gln) in organisms which lack glutaminyl-tRNA synthetase. The reaction takes place in the presence of glutamine and ATP through an activated gamma-phospho-Glu-tRNA(Gln). The polypeptide is Glutamyl-tRNA(Gln) amidotransferase subunit A (Prochlorococcus marinus (strain AS9601)).